We begin with the raw amino-acid sequence, 432 residues long: Gamma-glutamyl phosphate reductase (432 aa).

The protein belongs to the gamma-glutamyl phosphate reductase family.

Its subcellular location is the cytoplasm. It carries out the reaction L-glutamate 5-semialdehyde + phosphate + NADP(+) = L-glutamyl 5-phosphate + NADPH + H(+). Its pathway is amino-acid biosynthesis; L-proline biosynthesis; L-glutamate 5-semialdehyde from L-glutamate: step 2/2. Functionally, catalyzes the NADPH-dependent reduction of L-glutamate 5-phosphate into L-glutamate 5-semialdehyde and phosphate. The product spontaneously undergoes cyclization to form 1-pyrroline-5-carboxylate. The chain is Gamma-glutamyl phosphate reductase from Clavibacter michiganensis subsp. michiganensis (strain NCPPB 382).